Consider the following 560-residue polypeptide: Leiomodin-3 (560 aa).

The tract at residues 1–49 is interaction with tropomyosin alpha; sequence MSEHSRNSDQEELLDEEINEDEILANLSAEELKELQSEMEVMAPDPSLP. Positions 16-42 form a coiled coil; sequence EEINEDEILANLSAEELKELQSEMEVM. Disordered stretches follow at residues 45 to 68 and 127 to 217; these read DPSL…NFNH and IVAN…SKLD. Positions 142-167 are enriched in acidic residues; the sequence is ETDEEDEEEEDDDDDDEGEDDGEESE. Positions 168–182 are enriched in basic and acidic residues; that stretch reads ETNREEEGKAKEQIR. Polar residues predominate over residues 183–192; that stretch reads NCENNCQQVT. Basic and acidic residues predominate over residues 194 to 217; the sequence is KAFKEQRDRPEAQEQSEKKISKLD. Residues 386 to 425 adopt a coiled-coil conformation; that stretch reads VTNLLTRNQDKQRQKRQEEQKQQQLKEQKKLIAMLENGLG. 2 disordered regions span residues 437-480 and 494-530; these read PKPD…KYRT and QRKS…PPLV. Pro residues predominate over residues 448–458; that stretch reads QPPPPRPPNPQ. The span at 498–516 shows a compositional bias: basic and acidic residues; sequence RMPEAREPPEKTNLKDVIK. In terms of domain architecture, WH2 spans 534–553; sequence PRDQLLNDIRHSSVAYLKPV.

The protein belongs to the tropomodulin family. In terms of assembly, may interact with tropomyosin alpha (TPM1/2) N-terminus. Interacts with KLHL40; leading to stabilization. Post-translationally, ubiquitinated, leading to its degradation. Interaction with KLHL40 negatively regulates ubiquitination and degradation. Expressed in cardiac and at higher levels in skeletal muscles (at protein level).

It is found in the cytoplasm. The protein resides in the myofibril. Its subcellular location is the sarcomere. It localises to the m line. The protein localises to the a band. It is found in the cytoskeleton. In terms of biological role, essential for the organization of sarcomeric actin thin filaments in skeletal muscle. Increases the rate of actin polymerization. The chain is Leiomodin-3 (LMOD3) from Homo sapiens (Human).